The sequence spans 155 residues: Prespore-specific protein E (155 aa).

The first 20 residues, 1–20 (MRFISIFLIIVALCVSSSWA), serve as a signal peptide directing secretion. N-linked (GlcNAc...) asparagine glycans are attached at residues asparagine 22, asparagine 82, asparagine 85, and asparagine 102. Serine 105 carries O-linked (GlcNAc) serine glycosylation. The GPI-like-anchor amidated asparagine moiety is linked to residue asparagine 133. Residues 134–155 (SADKVAVGIAIIFGALISLLAL) constitute a propeptide, removed in mature form.

In terms of processing, the GPI-like-anchor contains a phosphoceramide group, rather than a phosphatidyl group.

The protein localises to the cell membrane. The sequence is that of Prespore-specific protein E (pspE) from Dictyostelium discoideum (Social amoeba).